Reading from the N-terminus, the 319-residue chain is Annexin A4 (319 aa).

The residue at position 2 (A2) is an N-acetylalanine. T7 carries the phosphothreonine modification. A Phosphoserine modification is found at S12. Annexin repeat units lie at residues 14 to 85 (FNAA…GMMT), 86 to 157 (PTVL…SLSA), 169 to 241 (ALMR…AIVK), and 245 to 316 (NKSA…ILCG). K213, K293, and K300 each carry N6-acetyllysine.

The protein belongs to the annexin family. As to quaternary structure, monomer. Binds to SFTPA1 in a Ca(2+)-dependent manner.

The protein resides in the zymogen granule membrane. In terms of biological role, may play a role in alveolar type II cells through interaction with the surfactant protein SFTPA1 (SP-A). This Bos taurus (Bovine) protein is Annexin A4 (ANXA4).